The sequence spans 1829 residues: Iron-regulated protein FrpC (1829 aa).

22 Hemolysin-type calcium-binding repeats span residues 869-886 (FGHN…NDTL), 887-904 (IGGA…SDTY), 1015-1032 (NGGL…DDLL), 1033-1050 (NGDA…NDTL), 1051-1068 (NGGE…NDAL), 1069-1086 (NGGE…NDTL), 1087-1104 (IGGA…SDTY), 1215-1232 (NGGL…DDLL), 1233-1250 (NGDA…NDTL), 1251-1268 (DGGE…NDAL), 1269-1286 (NGGE…NDTL), 1287-1304 (IGGA…SDTY), 1415-1432 (NGGL…DDLL), 1433-1450 (NGDA…NDTL), 1451-1468 (DGGE…NDAL), 1469-1486 (NGGE…NDTL), 1487-1504 (IGGA…SDTY), 1615-1632 (NGGL…DDLL), 1633-1650 (NGDA…NDTL), 1651-1668 (NGGE…NDVL), 1669-1686 (NGGE…NDTL), and 1687-1704 (IGGA…SDTY).

This sequence belongs to the RTX prokaryotic toxin (TC 1.C.11) family.

The protein resides in the cell outer membrane. It localises to the secreted. In terms of biological role, may participate in the pathogenesis of meningococcal disease. The polypeptide is Iron-regulated protein FrpC (frpC) (Neisseria meningitidis serogroup C).